A 666-amino-acid polypeptide reads, in one-letter code: Probable potassium transport system protein Kup (666 aa).

A run of 12 helical transmembrane segments spans residues 16-36 (GFIIALGIVYGDIGTSPLYTI), 58-78 (ISLIIWTLTLITTIKYVLIAL), 100-120 (PWLIIPAMIGGATLLSDGALT), 141-161 (IYQNQTNVIITTLVILIVLFG), 165-185 (FGTGFIGKIFGPVMFIWFSFL), 221-241 (IFILGSIFLATTGAEALYSDL), 253-273 (WPFVKMCIVLSYCGQAAWILA), 294-314 (VYLVSLATLAAIIASQALISG), 343-363 (LYIPVINWILFAVTSCTVLAF), 373-393 (YGLAITITMLMTTILLKYYLI), 399-419 (PILAHLVMAFFALVEFIFFLA), and 424-444 (FMHGGYAVVILALAIVFVMFI).

It belongs to the HAK/KUP transporter (TC 2.A.72) family.

It localises to the cell membrane. The enzyme catalyses K(+)(in) + H(+)(in) = K(+)(out) + H(+)(out). Its function is as follows. Transport of potassium into the cell. Likely operates as a K(+):H(+) symporter. The protein is Probable potassium transport system protein Kup of Streptococcus pyogenes serotype M1.